The following is a 148-amino-acid chain: Transcription antitermination protein NusB (148 aa).

The protein belongs to the NusB family.

In terms of biological role, involved in transcription antitermination. Required for transcription of ribosomal RNA (rRNA) genes. Binds specifically to the boxA antiterminator sequence of the ribosomal RNA (rrn) operons. In Novosphingobium aromaticivorans (strain ATCC 700278 / DSM 12444 / CCUG 56034 / CIP 105152 / NBRC 16084 / F199), this protein is Transcription antitermination protein NusB.